An 85-amino-acid chain; its full sequence is Small ribosomal subunit protein bS20 (85 aa).

Belongs to the bacterial ribosomal protein bS20 family.

Its function is as follows. Binds directly to 16S ribosomal RNA. The polypeptide is Small ribosomal subunit protein bS20 (Lactobacillus johnsonii (strain CNCM I-12250 / La1 / NCC 533)).